The following is a 383-amino-acid chain: MSLKQHTQTIFRQQFDRESDITIKAPGRVNLIGEHTDYNDGFVLPCAINYETVISCGKRDDRQIRVIAADYENQQDIFSLDAPIVPHPEYRWADYVRGVVKHLQMRNADFGGADLVICGNVPQGAGLSSSASLEVAVGQALQSLYQLPLSGVELALNGQEAENQFVGCNCGIMDQLISALGKKDHALLIDCRTLETRAVPMPENMAVVIINSNIQRGLVDSEYNTRRQQCEAAARFFGVKALRDVEPSLFFSIQDELDPVVAKRARHVISENARTLAAADALAAGNLKLMGQLMQESHISMRDDFEITVPPIDRLVEIVKSVIGDQGGVRMTGGGFGGCIIALMPLELVEQVRTTVAQEYPAHSGGKKETFYVCQASQGAGLC.

Residue 34-37 (EHTD) participates in substrate binding. An ATP-binding site is contributed by 124–130 (GAGLSSS). Residues S130 and E162 each coordinate Mg(2+). D174 serves as the catalytic Proton acceptor. Y223 is a binding site for substrate.

It belongs to the GHMP kinase family. GalK subfamily.

It is found in the cytoplasm. The enzyme catalyses alpha-D-galactose + ATP = alpha-D-galactose 1-phosphate + ADP + H(+). It participates in carbohydrate metabolism; galactose metabolism. In terms of biological role, catalyzes the transfer of the gamma-phosphate of ATP to D-galactose to form alpha-D-galactose-1-phosphate (Gal-1-P). This is Galactokinase from Yersinia pseudotuberculosis serotype O:1b (strain IP 31758).